A 261-amino-acid chain; its full sequence is Acetoacetate decarboxylase 2 (261 aa).

Lys-116 acts as the Schiff-base intermediate with acetoacetate in catalysis.

It belongs to the ADC family.

The catalysed reaction is acetoacetate + H(+) = acetone + CO2. Its function is as follows. Catalyzes the conversion of acetoacetate to acetone and carbon dioxide. The polypeptide is Acetoacetate decarboxylase 2 (Mesorhizobium japonicum (strain LMG 29417 / CECT 9101 / MAFF 303099) (Mesorhizobium loti (strain MAFF 303099))).